A 199-amino-acid chain; its full sequence is Recombination protein RecR (199 aa).

The C4-type zinc-finger motif lies at 58-73 (CRTCFSLSDQPECRIC). The Toprim domain maps to 81–176 (SIICVVEKPT…NVTRIASGVP (96 aa)).

This sequence belongs to the RecR family.

Functionally, may play a role in DNA repair. It seems to be involved in an RecBC-independent recombinational process of DNA repair. It may act with RecF and RecO. In Desulforapulum autotrophicum (strain ATCC 43914 / DSM 3382 / VKM B-1955 / HRM2) (Desulfobacterium autotrophicum), this protein is Recombination protein RecR.